We begin with the raw amino-acid sequence, 213 residues long: Orotate phosphoribosyltransferase (213 aa).

Lysine 26 contributes to the 5-phospho-alpha-D-ribose 1-diphosphate binding site. Phenylalanine 34–phenylalanine 35 serves as a coordination point for orotate. 5-phospho-alpha-D-ribose 1-diphosphate is bound by residues tyrosine 72–lysine 73, arginine 99, lysine 100, lysine 103, histidine 105, and aspartate 124–alanine 132. Residues threonine 128 and arginine 156 each contribute to the orotate site.

This sequence belongs to the purine/pyrimidine phosphoribosyltransferase family. PyrE subfamily. Homodimer. Mg(2+) serves as cofactor.

The enzyme catalyses orotidine 5'-phosphate + diphosphate = orotate + 5-phospho-alpha-D-ribose 1-diphosphate. It functions in the pathway pyrimidine metabolism; UMP biosynthesis via de novo pathway; UMP from orotate: step 1/2. Functionally, catalyzes the transfer of a ribosyl phosphate group from 5-phosphoribose 1-diphosphate to orotate, leading to the formation of orotidine monophosphate (OMP). This chain is Orotate phosphoribosyltransferase, found in Haemophilus ducreyi (strain 35000HP / ATCC 700724).